The chain runs to 1400 residues: Clustered mitochondria protein homolog (1400 aa).

Disordered regions lie at residues 1 to 39, 56 to 78, and 212 to 243; these read MVSK…KEAS, GHDQ…QAED, and GDTG…KERP. Residues 56–69 are compositionally biased toward basic and acidic residues; that stretch reads GHDQAEEADSKQDG. Residues 380-622 form the Clu domain; it reads RAEDAYTSRL…RTFPPDLNFL (243 aa). Residues 684–741 are disordered; that stretch reads AALQDSNAAGAGSENKPLALESCDGTPDSPTSSESTLTPEDSEATTVSENSSAENQEA. The span at 707–722 shows a compositional bias: low complexity; it reads DGTPDSPTSSESTLTP. Over residues 727 to 741 the composition is skewed to polar residues; it reads ATTVSENSSAENQEA. TPR repeat units follow at residues 1088–1121, 1130–1163, 1172–1205, and 1214–1247; these read AFHF…FNNV, CACL…SERV, IQEY…MLVV, and ALLD…NTKY. Positions 1377–1388 are enriched in polar residues; sequence QDSGKIQEQQGS. The segment at 1377 to 1400 is disordered; the sequence is QDSGKIQEQQGSHLELDDKLPVDD. Over residues 1390-1400 the composition is skewed to basic and acidic residues; it reads LELDDKLPVDD.

It belongs to the CLU family.

Its subcellular location is the cytoplasm. Its function is as follows. mRNA-binding protein involved in proper cytoplasmic distribution of mitochondria. The protein is Clustered mitochondria protein homolog of Danio rerio (Zebrafish).